We begin with the raw amino-acid sequence, 309 residues long: Ribonuclease Z (309 aa).

Positions 63, 65, 67, 68, 145, 216, and 274 each coordinate Zn(2+). The Proton acceptor role is filled by D67.

This sequence belongs to the RNase Z family. Homodimer. It depends on Zn(2+) as a cofactor.

The enzyme catalyses Endonucleolytic cleavage of RNA, removing extra 3' nucleotides from tRNA precursor, generating 3' termini of tRNAs. A 3'-hydroxy group is left at the tRNA terminus and a 5'-phosphoryl group is left at the trailer molecule.. Its function is as follows. Zinc phosphodiesterase, which displays some tRNA 3'-processing endonuclease activity. Probably involved in tRNA maturation, by removing a 3'-trailer from precursor tRNA. The protein is Ribonuclease Z of Streptococcus pyogenes serotype M1.